Here is a 225-residue protein sequence, read N- to C-terminus: MINPTRARRMRYRLAAMAGMPEGKLILLNGGSSAGKTSLALAFQDLAAECWMHIGIDLFWFALPPEQLDLARVRPEYYTWDSAVEADGLEWFTVHPGPILDLAMHSRYRAIRAYLDNGMNVIADDVIWTREWLVDALRVFEGCRVWMVGVHVSDEEGARRELERGDRHPGWNRGSARAAHADAEYDFELDTTATPVHELARELHESYQACPYPMAFNRLRKRFLS.

30-37 (GGSSAGKT) contributes to the ATP binding site.

It to S.violaceus chloramphenicol 3-O phosphotransferase.

In Mycobacterium tuberculosis (strain CDC 1551 / Oshkosh), this protein is Putative O-phosphotransferase MT2714.